The primary structure comprises 606 residues: Membrane protein insertase YidC (606 aa).

Residues 8 to 28 (LILATALSFIVILVWFVLFPP) traverse the membrane as a helical segment. The tract at residues 33–59 (MPLTGETSTELTPDAATGSLPSVTSDT) is disordered. A run of 6 helical transmembrane segments spans residues 116-136 (IVTMLSPVGSPGAYYALYGWA), 348-368 (FIDSIDWGWFFFLTKPIFFLL), 374-394 (FIGNMGWAIIGLTLIIKAILL), 448-468 (LPILLQIPIFFSLYKVIFVTI), 506-526 (SIMALIFIGILPLLLGISMWL), and 542-562 (IFAWMPWVFMFMLGGFASGLV).

Belongs to the OXA1/ALB3/YidC family. Type 1 subfamily. In terms of assembly, interacts with the Sec translocase complex via SecD. Specifically interacts with transmembrane segments of nascent integral membrane proteins during membrane integration.

The protein localises to the cell inner membrane. In terms of biological role, required for the insertion and/or proper folding and/or complex formation of integral membrane proteins into the membrane. Involved in integration of membrane proteins that insert both dependently and independently of the Sec translocase complex, as well as at least some lipoproteins. Aids folding of multispanning membrane proteins. This chain is Membrane protein insertase YidC, found in Roseobacter denitrificans (strain ATCC 33942 / OCh 114) (Erythrobacter sp. (strain OCh 114)).